The chain runs to 111 residues: Translation initiation factor 1A (111 aa).

Over residues 1-13 (MKKSNNKNNHKNN) the composition is skewed to basic residues. The disordered stretch occupies residues 1–30 (MKKSNNKNNHKNNHNNNQGGENIRVRSPRR). The S1-like domain maps to 23-96 (IRVRSPRRGE…EKADVIWRYT (74 aa)).

The protein belongs to the eIF-1A family.

In terms of biological role, seems to be required for maximal rate of protein biosynthesis. Enhances ribosome dissociation into subunits and stabilizes the binding of the initiator Met-tRNA(I) to 40 S ribosomal subunits. The sequence is that of Translation initiation factor 1A from Methanosphaera stadtmanae (strain ATCC 43021 / DSM 3091 / JCM 11832 / MCB-3).